The sequence spans 300 residues: Probable alpha-L-glutamate ligase (300 aa).

Residues 104–287 form the ATP-grasp domain; that stretch reads LQLLARQGID…IAGKMISWIE (184 aa). ATP contacts are provided by residues Lys-141, 178–179, Asp-187, and 211–213; these read EY and RSN. Mg(2+) is bound by residues Asp-248, Glu-260, and Asn-262. Positions 248, 260, and 262 each coordinate Mn(2+).

Belongs to the RimK family. Mg(2+) serves as cofactor. It depends on Mn(2+) as a cofactor.

This Enterobacter sp. (strain 638) protein is Probable alpha-L-glutamate ligase.